Consider the following 552-residue polypeptide: Amino-acid acetyltransferase, mitochondrial (552 aa).

A mitochondrion-targeting transit peptide spans 1–32 (MIKTWIRCLTTEVRYHQPNAHGRSLVMSVLNS). The 167-residue stretch at 379–545 (QTGKSDPVSK…LRDYAKYVRD (167 aa)) folds into the N-acetyltransferase domain.

The protein belongs to the acetyltransferase family.

It is found in the mitochondrion. The enzyme catalyses L-glutamate + acetyl-CoA = N-acetyl-L-glutamate + CoA + H(+). It functions in the pathway amino-acid biosynthesis; L-arginine biosynthesis; N(2)-acetyl-L-ornithine from L-glutamate: step 1/4. Functionally, N-acetylglutamate synthase involved in arginine biosynthesis. The polypeptide is Amino-acid acetyltransferase, mitochondrial (ARG2) (Kluyveromyces lactis (strain ATCC 8585 / CBS 2359 / DSM 70799 / NBRC 1267 / NRRL Y-1140 / WM37) (Yeast)).